The sequence spans 61 residues: Bacteriocin leucocin-A (61 aa).

Positions 1-24 are excised as a propeptide; the sequence is MMNMKPTESYEQLDNSALEQVVGG. An intrachain disulfide couples Cys-33 to Cys-38.

This sequence belongs to the bacteriocin class IIA/YGNGV family.

The protein resides in the secreted. Inhibits a wide spectrum of lactic acid bacteria. The protein is Bacteriocin leucocin-A (lcnA) of Leuconostoc gelidum.